A 120-amino-acid chain; its full sequence is Ribonuclease P protein component 2 (120 aa).

The protein belongs to the eukaryotic/archaeal RNase P protein component 2 family. In terms of assembly, consists of a catalytic RNA component and at least 4-5 protein subunits.

Its subcellular location is the cytoplasm. The catalysed reaction is Endonucleolytic cleavage of RNA, removing 5'-extranucleotides from tRNA precursor.. Its function is as follows. Part of ribonuclease P, a protein complex that generates mature tRNA molecules by cleaving their 5'-ends. The protein is Ribonuclease P protein component 2 of Methanobrevibacter smithii (strain ATCC 35061 / DSM 861 / OCM 144 / PS).